We begin with the raw amino-acid sequence, 178 residues long: Acireductone dioxygenase 1 (178 aa).

Fe(2+) is bound by residues H84, H86, E90, and H130. Positions 84, 86, 90, and 130 each coordinate Ni(2+).

The protein belongs to the acireductone dioxygenase (ARD) family. Fe(2+) serves as cofactor. Requires Ni(2+) as cofactor.

Its subcellular location is the cytoplasm. The protein resides in the nucleus. It carries out the reaction 1,2-dihydroxy-5-(methylsulfanyl)pent-1-en-3-one + O2 = 4-methylsulfanyl-2-oxobutanoate + formate + 2 H(+). The catalysed reaction is 1,2-dihydroxy-5-(methylsulfanyl)pent-1-en-3-one + O2 = 3-(methylsulfanyl)propanoate + CO + formate + 2 H(+). It functions in the pathway amino-acid biosynthesis; L-methionine biosynthesis via salvage pathway; L-methionine from S-methyl-5-thio-alpha-D-ribose 1-phosphate: step 5/6. In terms of biological role, catalyzes 2 different reactions between oxygen and the acireductone 1,2-dihydroxy-3-keto-5-methylthiopentene (DHK-MTPene) depending upon the metal bound in the active site. Fe-containing acireductone dioxygenase (Fe-ARD) produces formate and 2-keto-4-methylthiobutyrate (KMTB), the alpha-ketoacid precursor of methionine in the methionine recycle pathway. Ni-containing acireductone dioxygenase (Ni-ARD) produces methylthiopropionate, carbon monoxide and formate, and does not lie on the methionine recycle pathway. This chain is Acireductone dioxygenase 1, found in Coprinopsis cinerea (strain Okayama-7 / 130 / ATCC MYA-4618 / FGSC 9003) (Inky cap fungus).